A 457-amino-acid chain; its full sequence is Argininosuccinate lyase (457 aa).

Belongs to the lyase 1 family. Argininosuccinate lyase subfamily.

It localises to the cytoplasm. It carries out the reaction 2-(N(omega)-L-arginino)succinate = fumarate + L-arginine. It participates in amino-acid biosynthesis; L-arginine biosynthesis; L-arginine from L-ornithine and carbamoyl phosphate: step 3/3. This chain is Argininosuccinate lyase, found in Exiguobacterium sibiricum (strain DSM 17290 / CCUG 55495 / CIP 109462 / JCM 13490 / 255-15).